A 280-amino-acid polypeptide reads, in one-letter code: Hydroxyacylglutathione hydrolase, mitochondrial (280 aa).

Lys-61 is subject to N6-acetyllysine. Residues His-74, His-76, Asp-78, and His-79 each contribute to the Zn(2+) site. Lys-88 is modified (N6-acetyllysine). Residues His-130 and Asp-154 each coordinate Zn(2+). Residues 163–165 and 193–195 each bind substrate; these read KFY and HEY. His-193 provides a ligand contact to Zn(2+). Lys-201 carries the N6-acetyllysine; alternate modification. Lys-201 is subject to N6-succinyllysine; alternate. 269-272 lines the substrate pocket; it reads RREK.

Belongs to the metallo-beta-lactamase superfamily. Glyoxalase II family. In terms of assembly, monomer. It depends on Zn(2+) as a cofactor. As to expression, testis.

It localises to the mitochondrion matrix. Its subcellular location is the cytoplasm. It catalyses the reaction an S-(2-hydroxyacyl)glutathione + H2O = a 2-hydroxy carboxylate + glutathione + H(+). The catalysed reaction is (R)-S-lactoylglutathione + H2O = (R)-lactate + glutathione + H(+). It functions in the pathway secondary metabolite metabolism; methylglyoxal degradation; (R)-lactate from methylglyoxal: step 2/2. Functionally, thiolesterase that catalyzes the hydrolysis of S-D-lactoyl-glutathione to form glutathione and D-lactic acid. In Callithrix jacchus (White-tufted-ear marmoset), this protein is Hydroxyacylglutathione hydrolase, mitochondrial (HAGH).